Consider the following 322-residue polypeptide: Solute carrier family 35 member B1 (322 aa).

8 helical membrane passes run 12-32, 51-71, 85-105, 136-156, 168-188, 210-230, 243-263, and 285-305; these read LRLP…GILQ, FALT…KILI, WLYA…NSAL, YPLA…LFMY, TVGF…LTGV, LWST…WEFL, ILLF…TVVY, and VILF…LVFL. The short motif at 318-322 is the Di-lysine motif element; it reads KKTSH.

It belongs to the nucleotide-sugar transporter family. SLC35B subfamily.

The protein localises to the endoplasmic reticulum membrane. It carries out the reaction ADP(in) + ATP(out) = ADP(out) + ATP(in). The enzyme catalyses UDP(out) + ATP(in) = UDP(in) + ATP(out). It catalyses the reaction UTP(out) + ATP(in) = UTP(in) + ATP(out). The catalysed reaction is dATP(out) + ATP(in) = dATP(in) + ATP(out). ATP:ADP antiporter that catalyzes the exchange of ATP and ADP across the endoplasmic reticulum (ER) membrane. Imports ATP from the cytosol to the ER lumen and exports ADP in the opposite direction. Regulates ER energy metabolism and protein biogenesis. Appears to be part of a calcium-dependent ER to cytosol low energy response axis, where calcium efflux from ER to the cytosol triggers ATP import into the ER lumen to maintain sufficient ATP supply. Provides ATP to ER chaperone HSPA5 that drives protein folding and trafficking in the ER. Can transport dATP, UTP or UDP in exchange for ATP, but the physiological relevance of this process remains to be established. The chain is Solute carrier family 35 member B1 (Slc35b1) from Rattus norvegicus (Rat).